A 250-amino-acid chain; its full sequence is Probable syntaxin-8B (250 aa).

Residues 1 to 213 lie on the Cytoplasmic side of the membrane; the sequence is MGDYWLNEHD…NRRMETIKQN (213 aa). Residues 73–100 adopt a coiled-coil conformation; it reads EKELLRRKNKVESLISMKNQLNSTLDAA. Residues 148-210 form the t-SNARE coiled-coil homology domain; the sequence is QHIMREQDES…RNANRRMETI (63 aa). The chain crosses the membrane as a helical; Anchor for type IV membrane protein span at residues 214–234; that stretch reads AGSTCMIVCIVILIILIVVLI. The Vesicular portion of the chain corresponds to 235-250; that stretch reads ATDSGCKIYNDPKHCP.

It belongs to the syntaxin family.

The protein localises to the membrane. This is Probable syntaxin-8B (syn8B) from Dictyostelium discoideum (Social amoeba).